We begin with the raw amino-acid sequence, 361 residues long: POU domain, class 3, transcription factor 4 (361 aa).

Disordered stretches follow at residues 99–131 (PHVA…GQPL) and 144–192 (MLEH…PTSD). A compositionally biased stretch (polar residues) spans 119–131 (APNSSITSSGQPL). Residues 165 to 183 (VLREPPDHGELGSHHCQDH) show a composition bias toward basic and acidic residues. A POU-specific domain is found at 186 to 260 (EETPTSDELE…LLNKWLEEAD (75 aa)). Serine 265 is modified (phosphoserine). Positions 278 to 337 (KRKKRTSIEVSVKGVLETHFLKCPKPAAQEISSLADSLQLEKEVVRVWFCNRRQKEKRMT) form a DNA-binding region, homeobox. A disordered region spans residues 334 to 361 (KRMTPPGDQQPHEVYSHTVKTDASCHDL). A compositionally biased stretch (basic and acidic residues) spans 343–361 (QPHEVYSHTVKTDASCHDL).

The protein belongs to the POU transcription factor family. Class-3 subfamily. Interacts with HNRNPU. As to expression, brain specific.

Its subcellular location is the nucleus. Probable transcription factor which exert its primary action widely during early neural development and in a very limited set of neurons in the mature brain. This Mus musculus (Mouse) protein is POU domain, class 3, transcription factor 4 (Pou3f4).